The primary structure comprises 95 residues: Co-chaperonin GroES (95 aa).

It belongs to the GroES chaperonin family. As to quaternary structure, heptamer of 7 subunits arranged in a ring. Interacts with the chaperonin GroEL.

Its subcellular location is the cytoplasm. In terms of biological role, together with the chaperonin GroEL, plays an essential role in assisting protein folding. The GroEL-GroES system forms a nano-cage that allows encapsulation of the non-native substrate proteins and provides a physical environment optimized to promote and accelerate protein folding. GroES binds to the apical surface of the GroEL ring, thereby capping the opening of the GroEL channel. This is Co-chaperonin GroES from Streptococcus mutans serotype c (strain ATCC 700610 / UA159).